Here is a 147-residue protein sequence, read N- to C-terminus: MLTNQELTAKVKEISLTYFKQSFDHEAKWNQRLRTTGGRFFPKDLHLDFNPKMAELKDFEGVILHELTHYHLYRSKRGYKHRDADFKRLLSQVGGLRYAPSVIDKKIKYYYSCQNCGQLYPRQRKIDTKKYRCGKCRGKLILKTSGN.

One can recognise a SprT-like domain in the interval 9 to 142; that stretch reads AKVKEISLTY…CGKCRGKLIL (134 aa). Zn(2+) is bound at residue His65. Glu66 is an active-site residue. His69 serves as a coordination point for Zn(2+).

It belongs to the SprT family. Requires Zn(2+) as cofactor.

Its subcellular location is the cytoplasm. This Lactococcus lactis subsp. lactis (strain IL1403) (Streptococcus lactis) protein is Protein SprT-like (yciD).